A 363-amino-acid chain; its full sequence is MSAIYNFCAGPAMLPAAVMKKAQQELLDWNGQGVSVMEISHRSKEFIALTEQAESDLRELMQIPANYHVLFMHGGGRGQFSAVVNNFLGEQGKALYLVSGQWSSAALAEAQKLAGEAQIDSLNIVEKHNGLNAVVLPDLHKIDADYRYVHYCPNETVDGIEIFDELDSPWPIVADLSSTIMSREIDVSRYGLIYAGAQKNIGPSGLSIVIVRDDMLKLPSLPQSSIMDYRLAVEHDSMFNTPPTFAWYLAAEVFAWLKSTGGISSIAKINQQKAQMLYQCIDGNAFYRNGVVAANRSQMNVTFQLVNEALDSEFLKQAQIAGLVALKGHRIVGGMRASLYNAMPLDGIVALVKFMNEFAAKHS.

Arg-42 provides a ligand contact to L-glutamate. Residues 76 to 77 (GR), Trp-102, Thr-156, Asp-175, and Gln-198 each bind pyridoxal 5'-phosphate. Residue Lys-199 is modified to N6-(pyridoxal phosphate)lysine. Residue 240-241 (NT) coordinates pyridoxal 5'-phosphate.

Belongs to the class-V pyridoxal-phosphate-dependent aminotransferase family. SerC subfamily. In terms of assembly, homodimer. It depends on pyridoxal 5'-phosphate as a cofactor.

The protein localises to the cytoplasm. It catalyses the reaction O-phospho-L-serine + 2-oxoglutarate = 3-phosphooxypyruvate + L-glutamate. The catalysed reaction is 4-(phosphooxy)-L-threonine + 2-oxoglutarate = (R)-3-hydroxy-2-oxo-4-phosphooxybutanoate + L-glutamate. It participates in amino-acid biosynthesis; L-serine biosynthesis; L-serine from 3-phospho-D-glycerate: step 2/3. It functions in the pathway cofactor biosynthesis; pyridoxine 5'-phosphate biosynthesis; pyridoxine 5'-phosphate from D-erythrose 4-phosphate: step 3/5. Catalyzes the reversible conversion of 3-phosphohydroxypyruvate to phosphoserine and of 3-hydroxy-2-oxo-4-phosphonooxybutanoate to phosphohydroxythreonine. The sequence is that of Phosphoserine aminotransferase from Shewanella baltica (strain OS155 / ATCC BAA-1091).